A 504-amino-acid polypeptide reads, in one-letter code: Zinc finger CCCH domain-containing protein 18 (504 aa).

Positions 40–69 (SNADLLEVHEELLAAIKDAEEGLLHLKRSR) form a coiled coil. Positions 77 to 105 (IFPNQEPTSEAPEVAVDPPDDVEPEPLEP) are disordered. Acidic residues predominate over residues 94–104 (PPDDVEPEPLE). The C3H1-type zinc finger occupies 146-173 (SENMSMCKFFLQQRCRFGSNCRLSHGIV). The interval 230-276 (GSSARLPSDSLSISEYADESDEDGEGSSSDEGSDFSEDGDQEDESVH) is disordered. Acidic residues-rich tracts occupy residues 245–254 (YADESDEDGE) and 260–272 (EGSD…DQED). One can recognise a G-patch domain in the interval 304-350 (TRGVASKMMAKMGYREGMGLGVSGQGMLDPIPVKVLPPKQSLDHAVA). Disordered stretches follow at residues 351–390 (ASEV…EEER), 406–432 (AEGS…DRRS), and 482–504 (EATH…WLKF). Residues 361 to 374 (GKKRSRGGKRKREK) show a composition bias toward basic residues. Composition is skewed to basic and acidic residues over residues 375–390 (KFAE…EEER), 413–432 (SKKD…DRRS), and 493–504 (ARKEKEKKWLKF). Positions 430–500 (RRSLLAYDDE…AVARKEKEKK (71 aa)) form a coiled coil.

In Oryza sativa subsp. japonica (Rice), this protein is Zinc finger CCCH domain-containing protein 18.